The sequence spans 469 residues: tRNA-2-methylthio-N(6)-dimethylallyladenosine synthase (469 aa).

The MTTase N-terminal domain occupies 22–142 (RKVFIKTYGC…LPEALRRAQQ (121 aa)). Residues Cys31, Cys67, Cys105, Cys183, Cys187, and Cys190 each coordinate [4Fe-4S] cluster. The 233-residue stretch at 169–401 (RARGVTAFLT…QALLLKQQQE (233 aa)) folds into the Radical SAM core domain. Residues 404–466 (ESCIGKEIDL…TNSLFAERAE (63 aa)) form the TRAM domain.

This sequence belongs to the methylthiotransferase family. MiaB subfamily. In terms of assembly, monomer. [4Fe-4S] cluster is required as a cofactor.

The protein resides in the cytoplasm. It carries out the reaction N(6)-dimethylallyladenosine(37) in tRNA + (sulfur carrier)-SH + AH2 + 2 S-adenosyl-L-methionine = 2-methylsulfanyl-N(6)-dimethylallyladenosine(37) in tRNA + (sulfur carrier)-H + 5'-deoxyadenosine + L-methionine + A + S-adenosyl-L-homocysteine + 2 H(+). In terms of biological role, catalyzes the methylthiolation of N6-(dimethylallyl)adenosine (i(6)A), leading to the formation of 2-methylthio-N6-(dimethylallyl)adenosine (ms(2)i(6)A) at position 37 in tRNAs that read codons beginning with uridine. This chain is tRNA-2-methylthio-N(6)-dimethylallyladenosine synthase, found in Rhizobium etli (strain CIAT 652).